The sequence spans 517 residues: Aldehyde dehydrogenase, mitochondrial (517 aa).

Residues 1 to 17 constitute a mitochondrion transit peptide; sequence MLRAAARFGPRLGRRLL. The SIFI-degron motif lies at 9–24; that stretch reads GPRLGRRLLSAAATQA. Residues lysine 52, lysine 73, lysine 78, and lysine 159 each carry the N6-acetyllysine modification. 262–267 is an NAD(+) binding site; that stretch reads GSTEIG. The active-site Proton acceptor is glutamate 285. The active-site Nucleophile is cysteine 319. An N6-acetyllysine mark is found at lysine 368, lysine 383, lysine 426, lysine 428, and lysine 451.

The protein belongs to the aldehyde dehydrogenase family. Homotetramer. In response to mitochondrial stress, the precursor protein is ubiquitinated by the SIFI complex in the cytoplasm before mitochondrial import, leading to its degradation. Within the SIFI complex, UBR4 initiates ubiquitin chain that are further elongated or branched by KCMF1.

It is found in the mitochondrion matrix. The catalysed reaction is an aldehyde + NAD(+) + H2O = a carboxylate + NADH + 2 H(+). The protein operates within alcohol metabolism; ethanol degradation; acetate from ethanol: step 2/2. In terms of biological role, required for clearance of cellular formaldehyde, a cytotoxic and carcinogenic metabolite that induces DNA damage. This is Aldehyde dehydrogenase, mitochondrial (ALDH2) from Homo sapiens (Human).